Consider the following 537-residue polypeptide: Copine-3 (537 aa).

2 consecutive C2 domains span residues M1–L115 and G124–F247. The residue at position 14 (S14) is a Phosphoserine. 7 residues coordinate Ca(2+): D22, D28, D81, D83, D93, D154, and D160. S197 carries the phosphoserine modification. Ca(2+)-binding residues include D216, D218, and D224. A Phosphoserine modification is found at S243. Positions N291–Q513 constitute a VWFA domain.

Belongs to the copine family. Monomer. Interacts with ERBB2 (preferentially with the tyrosine phosphorylated form); this interaction occurs at the cell membrane and is increased in a growth factor heregulin-dependent manner. Interacts with SHC1; this interaction may mediate the binding of CPNE3 with ERBB2. Interacts with RACK1. Requires Ca(2+) as cofactor. In terms of processing, phosphorylated on serine and threonine residues. Expressed in breast and weakly in prostate and ovarian tissues. Expressed in neutrophils (at protein level). Widely expressed. Expressed in the brain. Expressed in neutrophil precursors from the bone marrow and peripheral blood. Expressed in primary breast tumors and ovarian endometrioid adenocarcinoma.

The protein localises to the nucleus. The protein resides in the cytoplasm. It localises to the cell membrane. It is found in the cell junction. Its subcellular location is the focal adhesion. Its function is as follows. Calcium-dependent phospholipid-binding protein that plays a role in ERBB2-mediated tumor cell migration in response to growth factor heregulin stimulation. The sequence is that of Copine-3 from Homo sapiens (Human).